The following is a 131-amino-acid chain: Small ribosomal subunit protein uS8 (131 aa).

It belongs to the universal ribosomal protein uS8 family. As to quaternary structure, part of the 30S ribosomal subunit. Contacts proteins S5 and S12.

One of the primary rRNA binding proteins, it binds directly to 16S rRNA central domain where it helps coordinate assembly of the platform of the 30S subunit. This is Small ribosomal subunit protein uS8 from Methylococcus capsulatus (strain ATCC 33009 / NCIMB 11132 / Bath).